The chain runs to 335 residues: Anthranilate phosphoribosyltransferase (335 aa).

Residues G79, 82 to 83, S87, 89 to 92, 107 to 115, and S119 each bind 5-phospho-alpha-D-ribose 1-diphosphate; these read GD, NIST, and KHGNRSITS. G79 provides a ligand contact to anthranilate. S91 serves as a coordination point for Mg(2+). Residue N110 coordinates anthranilate. R165 provides a ligand contact to anthranilate. Positions 224 and 225 each coordinate Mg(2+).

Belongs to the anthranilate phosphoribosyltransferase family. Homodimer. It depends on Mg(2+) as a cofactor.

The catalysed reaction is N-(5-phospho-beta-D-ribosyl)anthranilate + diphosphate = 5-phospho-alpha-D-ribose 1-diphosphate + anthranilate. It functions in the pathway amino-acid biosynthesis; L-tryptophan biosynthesis; L-tryptophan from chorismate: step 2/5. Functionally, catalyzes the transfer of the phosphoribosyl group of 5-phosphorylribose-1-pyrophosphate (PRPP) to anthranilate to yield N-(5'-phosphoribosyl)-anthranilate (PRA). This Lactococcus lactis subsp. cremoris (strain MG1363) protein is Anthranilate phosphoribosyltransferase.